A 1015-amino-acid chain; its full sequence is Formate dehydrogenase, nitrate-inducible, major subunit (1015 aa).

A signal peptide (tat-type signal) is located at residues 1–33 (MDVSRRQFFKICAGGMAGTTVAALGFAPKQALA). The 4Fe-4S Mo/W bis-MGD-type domain occupies 43–106 (AKEIRNTCTY…GLLDYVNSEN (64 aa)). 4 residues coordinate [4Fe-4S] cluster: Cys-50, Cys-53, Cys-57, and Cys-92. Mo-bis(molybdopterin guanine dinucleotide) is bound at residue Sec-196. Position 196 (Sec-196) is a non-standard amino acid, selenocysteine.

This sequence belongs to the prokaryotic molybdopterin-containing oxidoreductase family. As to quaternary structure, trimer of heterotrimers, consisting of subunits alpha, beta and gamma. The cofactor is Mo-bis(molybdopterin guanine dinucleotide). It depends on [4Fe-4S] cluster as a cofactor. Exported by the Tat system. The position of the signal peptide cleavage has not been experimentally proven.

Its subcellular location is the periplasm. The enzyme catalyses a quinone + formate + H(+) = a quinol + CO2. In terms of biological role, formate dehydrogenase allows E.coli to use formate as major electron donor during anaerobic respiration, when nitrate is used as electron acceptor. The alpha subunit FdnG contains the formate oxidation site. Electrons are transferred from formate to menaquinone in the gamma subunit (FdnI), through the 4Fe-4S clusters in the beta subunit (FdnH). Formate dehydrogenase-N is part of a system that generates proton motive force, together with the dissimilatory nitrate reductase (Nar). This chain is Formate dehydrogenase, nitrate-inducible, major subunit (fdnG), found in Escherichia coli (strain K12).